Consider the following 549-residue polypeptide: Neurofilament light polypeptide (549 aa).

Ser2 carries the N-acetylserine modification. The head stretch occupies residues 2–92 (SSFYSEPYYS…KSIRTQEKAQ (91 aa)). The O-linked (GlcNAc) threonine glycan is linked to Thr21. Position 23 is an asymmetric dimethylarginine; alternate (Arg23). At Arg23 the chain carries Omega-N-methylarginine; alternate. Ser27 is a glycosylation site (O-linked (GlcNAc) serine). Omega-N-methylarginine is present on Arg30. Tyr43 carries the post-translational modification Phosphotyrosine. A phosphoserine mark is found at Ser56, Ser66, and Ser102. The IF rod domain maps to 89–400 (EKAQLQDLND…KLLEGEETRL (312 aa)). The tract at residues 93–124 (LQDLNDRFASFIERVHELEQQNKVLEAQLLVL) is coil 1A. The tract at residues 125–137 (RQKHSEPSRFRAL) is linker 1. The tract at residues 138-233 (YEQEIRDLRL…KVHEEEIAEL (96 aa)) is coil 1B. The linker 12 stretch occupies residues 234-252 (QAQIQYAQISVEMDVSSKP). The coil 2A stretch occupies residues 253–271 (DLSAALKDIRAQYEKLAAK). The interval 272 to 280 (NMQNAEEWF) is linker 2. Residues 281–396 (KSRFTVLTES…AAYRKLLEGE (116 aa)) form a coil 2B region. An epitope; recognized by IF-specific monoclonal antibody region spans residues 381–391 (ALDIEIAAYRK). The tail, subdomain A stretch occupies residues 397 to 443 (ETRLSFTSVGSLTTGYSQSSQVFGRSAYGGLQTSSYLMSTRSFPSYY). Residues 397–549 (ETRLSFTSVG…GEEQATKKKD (153 aa)) form a tail region. Residues 444–549 (TSHVQEEQIE…GEEQATKKKD (106 aa)) form a tail, subdomain B (acidic) region. Positions 462–549 (KAEEAKDEPP…GEEQATKKKD (88 aa)) are disordered. The span at 471–534 (PSEGEAEEEG…ETKEAEEEEK (64 aa)) shows a compositional bias: acidic residues. At Ser472 the chain carries Phosphoserine. Thr526 bears the Phosphothreonine mark. Over residues 535 to 549 (KDEGAGEEQATKKKD) the composition is skewed to basic and acidic residues.

It belongs to the intermediate filament family. Forms homodimers (in vitro). Forms heterodimers with NEFH or NEFM; which can further hetero-oligomerize (in vitro). Forms heterodimers with INA (in vitro). Interacts with ARHGEF28. Interacts with TRIM2. Post-translationally, O-glycosylated. Phosphorylated in the head and rod regions by the PKC kinase PKN1, leading to the inhibition of polymerization. In terms of processing, ubiquitinated in the presence of TRIM2 and UBE2D1.

The protein resides in the cell projection. It localises to the axon. Its subcellular location is the cytoplasm. The protein localises to the cytoskeleton. Its function is as follows. Neurofilaments usually contain three intermediate filament proteins: NEFL, NEFM, and NEFH which are involved in the maintenance of neuronal caliber. May additionally cooperate with the neuronal intermediate filament proteins PRPH and INA to form neuronal filamentous networks. The chain is Neurofilament light polypeptide (NEFL) from Sus scrofa (Pig).